The primary structure comprises 484 residues: Glutamate--tRNA ligase (484 aa).

The 'HIGH' region motif lies at 11-21; sequence PSPTGLLHIGN. The short motif at 255–259 is the 'KMSKS' region element; that stretch reads KLSKR. K258 is an ATP binding site.

Belongs to the class-I aminoacyl-tRNA synthetase family. Glutamate--tRNA ligase type 1 subfamily. In terms of assembly, monomer.

Its subcellular location is the cytoplasm. It carries out the reaction tRNA(Glu) + L-glutamate + ATP = L-glutamyl-tRNA(Glu) + AMP + diphosphate. Its function is as follows. Catalyzes the attachment of glutamate to tRNA(Glu) in a two-step reaction: glutamate is first activated by ATP to form Glu-AMP and then transferred to the acceptor end of tRNA(Glu). The polypeptide is Glutamate--tRNA ligase (Streptococcus suis (strain 98HAH33)).